The chain runs to 298 residues: Olfactory receptor 5AK3 (298 aa).

The Extracellular segment spans residues Met1–His25. Asn5 carries N-linked (GlcNAc...) asparagine glycosylation. Residues Val26–Ile46 traverse the membrane as a helical segment. Topologically, residues Leu47 to Arg54 are cytoplasmic. The helical transmembrane segment at Leu55–Ser75 threads the bilayer. Residues Ala76–Ile99 lie on the Extracellular side of the membrane. Cysteines 97 and 189 form a disulfide. Residues Gln100–Met120 form a helical membrane-spanning segment. The Cytoplasmic segment spans residues Asp121–Pro133. The helical transmembrane segment at Met134–Ile154 threads the bilayer. The N-linked (GlcNAc...) asparagine glycan is linked to Asn155. Residues Asn155–Ile196 are Extracellular-facing. Residues Ile197–Ser217 form a helical membrane-spanning segment. Residues Tyr218–Ser237 are Cytoplasmic-facing. The helical transmembrane segment at Phe238–Met258 threads the bilayer. The Extracellular portion of the chain corresponds to Tyr259–Met271. Asn265 carries N-linked (GlcNAc...) asparagine glycosylation. The chain crosses the membrane as a helical span at residues Lys272–Leu292. At Arg293–Lys298 the chain is on the cytoplasmic side.

This sequence belongs to the G-protein coupled receptor 1 family.

It localises to the cell membrane. Functionally, odorant receptor. In Homo sapiens (Human), this protein is Olfactory receptor 5AK3 (OR5AK3P).